Consider the following 393-residue polypeptide: HORMA domain-containing protein 1 (393 aa).

The region spanning 24–226 is the HORMA domain; sequence QQSLVLVKRL…TPFHTFKVKV (203 aa). Positions 322-393 are disordered; sequence SKTSELDVSE…RKFSEPKERI (72 aa). Basic and acidic residues predominate over residues 352–361; that stretch reads KSKENRKRTQ. At Ser375 the chain carries Phosphoserine. The Nuclear localization signal motif lies at 382-385; the sequence is KRRK.

In terms of assembly, interacts with HORMAD2. Interacts with IHO1. Phosphorylated at Ser-376 in a SPO11-dependent manner.

It is found in the nucleus. The protein resides in the chromosome. Functionally, plays a key role in meiotic progression. Regulates 3 different functions during meiosis: ensures that sufficient numbers of processed DNA double-strand breaks (DSBs) are available for successful homology search by increasing the steady-state numbers of single-stranded DSB ends. Promotes synaptonemal-complex formation independently of its role in homology search. Plays a key role in the male mid-pachytene checkpoint and the female meiotic prophase checkpoint: required for efficient build-up of ATR activity on unsynapsed chromosome regions, a process believed to form the basis of meiotic silencing of unsynapsed chromatin (MSUC) and meiotic prophase quality control in both sexes. The polypeptide is HORMA domain-containing protein 1 (HORMAD1) (Bos taurus (Bovine)).